The sequence spans 186 residues: Ribosome-recycling factor (186 aa).

Belongs to the RRF family.

It localises to the cytoplasm. Responsible for the release of ribosomes from messenger RNA at the termination of protein biosynthesis. May increase the efficiency of translation by recycling ribosomes from one round of translation to another. The sequence is that of Ribosome-recycling factor from Burkholderia lata (strain ATCC 17760 / DSM 23089 / LMG 22485 / NCIMB 9086 / R18194 / 383).